We begin with the raw amino-acid sequence, 795 residues long: Phenylalanine--tRNA ligase beta subunit (795 aa).

One can recognise a tRNA-binding domain in the interval 39-148 (AGSFHGVVVG…ADAPIGTDIR (110 aa)). The region spanning 401 to 476 (PKRATITLRR…RVYGYNNIPD (76 aa)) is the B5 domain. Mg(2+)-binding residues include Asp-454, Asp-460, Glu-463, and Glu-464. One can recognise an FDX-ACB domain in the interval 701 to 794 (SRFPANRRDI…LKERFQASLR (94 aa)).

This sequence belongs to the phenylalanyl-tRNA synthetase beta subunit family. Type 1 subfamily. Tetramer of two alpha and two beta subunits. Mg(2+) is required as a cofactor.

It is found in the cytoplasm. It carries out the reaction tRNA(Phe) + L-phenylalanine + ATP = L-phenylalanyl-tRNA(Phe) + AMP + diphosphate + H(+). This chain is Phenylalanine--tRNA ligase beta subunit, found in Shigella boydii serotype 4 (strain Sb227).